We begin with the raw amino-acid sequence, 207 residues long: FMN-dependent NADH:quinone oxidoreductase 3 (207 aa).

FMN contacts are provided by residues serine 10 and 16-18 (SIS).

It belongs to the azoreductase type 1 family. As to quaternary structure, homodimer. FMN serves as cofactor.

The catalysed reaction is 2 a quinone + NADH + H(+) = 2 a 1,4-benzosemiquinone + NAD(+). It carries out the reaction N,N-dimethyl-1,4-phenylenediamine + anthranilate + 2 NAD(+) = 2-(4-dimethylaminophenyl)diazenylbenzoate + 2 NADH + 2 H(+). Quinone reductase that provides resistance to thiol-specific stress caused by electrophilic quinones. In terms of biological role, also exhibits azoreductase activity. Catalyzes the reductive cleavage of the azo bond in aromatic azo compounds to the corresponding amines. This Burkholderia lata (strain ATCC 17760 / DSM 23089 / LMG 22485 / NCIMB 9086 / R18194 / 383) protein is FMN-dependent NADH:quinone oxidoreductase 3.